The sequence spans 79 residues: CDC42 small effector protein 1 (79 aa).

Residues cysteine 10 and cysteine 11 are each lipidated (S-palmitoyl cysteine). Positions 30–43 (IGEPMNFVHLTHIG) constitute a CRIB domain. The disordered stretch occupies residues 48–79 (GAGDGLAMTGAVQEQMRSKGNRDRPWSNSRAL). Over residues 63-72 (MRSKGNRDRP) the composition is skewed to basic and acidic residues.

It belongs to the CDC42SE/SPEC family. As to quaternary structure, interacts with CDC42 (in GTP-bound form). Interacts weakly with RAC1 and not at all with RHOA.

It is found in the cytoplasm. Its subcellular location is the cytoskeleton. It localises to the cell membrane. In terms of biological role, probably involved in the organization of the actin cytoskeleton by acting downstream of CDC42, inducing actin filament assembly. Alters CDC42-induced cell shape changes. In activated T-cells, may play a role in CDC42-mediated F-actin accumulation at the immunological synapse. May play a role in early contractile events in phagocytosis in macrophages. In Rattus norvegicus (Rat), this protein is CDC42 small effector protein 1 (Cdc42se1).